We begin with the raw amino-acid sequence, 446 residues long: tRNA-2-methylthio-N(6)-dimethylallyladenosine synthase (446 aa).

An MTTase N-terminal domain is found at 3–120; sequence QKLFIKTYGC…LPEMVNSVAH (118 aa). [4Fe-4S] cluster is bound by residues Cys-12, Cys-49, Cys-83, Cys-157, Cys-161, and Cys-164. One can recognise a Radical SAM core domain in the interval 143 to 375; the sequence is SSEGASAFVS…QQRILQFAQD (233 aa). A TRAM domain is found at 378–442; it reads RKMVGSTQRI…PNSLRGERVD (65 aa).

This sequence belongs to the methylthiotransferase family. MiaB subfamily. In terms of assembly, monomer. [4Fe-4S] cluster serves as cofactor.

Its subcellular location is the cytoplasm. It catalyses the reaction N(6)-dimethylallyladenosine(37) in tRNA + (sulfur carrier)-SH + AH2 + 2 S-adenosyl-L-methionine = 2-methylsulfanyl-N(6)-dimethylallyladenosine(37) in tRNA + (sulfur carrier)-H + 5'-deoxyadenosine + L-methionine + A + S-adenosyl-L-homocysteine + 2 H(+). In terms of biological role, catalyzes the methylthiolation of N6-(dimethylallyl)adenosine (i(6)A), leading to the formation of 2-methylthio-N6-(dimethylallyl)adenosine (ms(2)i(6)A) at position 37 in tRNAs that read codons beginning with uridine. This is tRNA-2-methylthio-N(6)-dimethylallyladenosine synthase from Hahella chejuensis (strain KCTC 2396).